Reading from the N-terminus, the 259-residue chain is Protein unc-50 homolog B (259 aa).

Polar residues predominate over residues 1–11; the sequence is MLPTTSVSPRS. Residues 1-21 are disordered; it reads MLPTTSVSPRSPDNGILSPRD. At 1–82 the chain is on the cytoplasmic side; it reads MLPTTSVSPR…TKDQWARDDP (82 aa). Residues 83–103 traverse the membrane as a helical segment; that stretch reads AFLVLLGIWLCVSTVGFGFVL. At 104–109 the chain is on the lumenal side; that stretch reads DMSFFE. Residues 110–130 traverse the membrane as a helical segment; it reads TFTLLLWVVFIDCVGVGLLIA. Residues 131 to 158 lie on the Cytoplasmic side of the membrane; it reads TSMWFVSNKYMVNRQGKDYDVEWGYTFD. The chain crosses the membrane as a helical span at residues 159-179; that stretch reads VHLNAFYPLLVILHFIQLFFI. The Lumenal portion of the chain corresponds to 180 to 181; the sequence is NH. The chain crosses the membrane as a helical span at residues 182-202; sequence VILTGWFIGCFVGNTLWLIAI. Over 203–222 the chain is Cytoplasmic; the sequence is GYYIYITFLGYSALPFLKNT. The helical transmembrane segment at 223 to 243 threads the bilayer; that stretch reads VVLLYPFAALALLYILSLALG. At 244 to 259 the chain is on the lumenal side; that stretch reads WNFTAKLCLFYKYRVR.

Belongs to the unc-50 family.

It localises to the nucleus inner membrane. Its subcellular location is the golgi apparatus membrane. In terms of biological role, involved in the cell surface expression of neuronal nicotinic receptors. Binds RNA. In Xenopus laevis (African clawed frog), this protein is Protein unc-50 homolog B (unc50-b).